The following is a 368-amino-acid chain: Glutamate 5-kinase (368 aa).

Lysine 9 provides a ligand contact to ATP. Residues serine 49, aspartate 136, and asparagine 148 each contribute to the substrate site. Residues 168 to 169 (TD) and 210 to 216 (TGGMMTK) contribute to the ATP site. Positions 275–353 (AGIITIDNGA…ADIENVLGYE (79 aa)) constitute a PUA domain.

The protein belongs to the glutamate 5-kinase family.

The protein resides in the cytoplasm. The enzyme catalyses L-glutamate + ATP = L-glutamyl 5-phosphate + ADP. It participates in amino-acid biosynthesis; L-proline biosynthesis; L-glutamate 5-semialdehyde from L-glutamate: step 1/2. Functionally, catalyzes the transfer of a phosphate group to glutamate to form L-glutamate 5-phosphate. This chain is Glutamate 5-kinase, found in Haemophilus influenzae (strain ATCC 51907 / DSM 11121 / KW20 / Rd).